Reading from the N-terminus, the 465-residue chain is Sperm microtubule associated protein 2-like (465 aa).

Residues 1–29 are compositionally biased toward polar residues; the sequence is MENQEFLSSSAPSEVTDGQVSTEISTCSE. Residues 1–140 form a disordered region; it reads MENQEFLSSS…REAKETELLP (140 aa). Composition is skewed to basic and acidic residues over residues 40 to 70 and 114 to 137; these read LDTH…QDQR and KARE…KETE. 8 THEG repeats span residues 174–192, 214–233, 260–279, 297–316, 333–352, 373–392, 409–428, and 446–465; these read RKCF…PKKQ, GALK…PKEV, PALF…PNGF, SLRI…AKGT, STLS…PRIK, AAMI…SKSV, ATTH…PNKR, and AALK…PLTR.

This chain is Sperm microtubule associated protein 2-like, found in Homo sapiens (Human).